A 126-amino-acid chain; its full sequence is KH homology domain-containing protein 1B (126 aa).

Residues 19-78 form the KH domain; it reads PLVFDMEEDQEDYIFGPDDEYLHTLEVHSNTLIQLERWFSPTGQTRVTVVGPLKARLWVM.

This sequence belongs to the KHDC1 family.

The protein is KH homology domain-containing protein 1B (Khdc1b) of Mus musculus (Mouse).